The following is a 302-amino-acid chain: Sulfate adenylyltransferase subunit 2 (302 aa).

It belongs to the PAPS reductase family. CysD subfamily. As to quaternary structure, heterodimer composed of CysD, the smaller subunit, and CysN.

The enzyme catalyses sulfate + ATP + H(+) = adenosine 5'-phosphosulfate + diphosphate. It functions in the pathway sulfur metabolism; hydrogen sulfide biosynthesis; sulfite from sulfate: step 1/3. Functionally, with CysN forms the ATP sulfurylase (ATPS) that catalyzes the adenylation of sulfate producing adenosine 5'-phosphosulfate (APS) and diphosphate, the first enzymatic step in sulfur assimilation pathway. APS synthesis involves the formation of a high-energy phosphoric-sulfuric acid anhydride bond driven by GTP hydrolysis by CysN coupled to ATP hydrolysis by CysD. This chain is Sulfate adenylyltransferase subunit 2, found in Salmonella agona (strain SL483).